We begin with the raw amino-acid sequence, 459 residues long: MAPKKHSGFMMFVNEWRNRNAEGRRMTLAQAVSHCGTIWEKMNTQQRGPYNSGGKDANVAQRAKRESSNGHGQVDKAQREATESLMDMKRTIERLVLNAKMSHDLENAKFVFVAFNYFTKALTTDVYVPAEFAACEYSLKEGIRSIYSTMIDPGQIIFGQGSDALLHSSTTHDLPLPPNALGEKNMTKLYRNIVDYLSKCQGKGKTLVVFTPAENITMVKSCFRYLECDDDFRDGGEKIQVFDIQYLLFILKKEVMNVADLNDEKINKFATDAFFKKDFFEFTAGIACQYHEDNDRTKYCTQSMVTRWAYTFTDFMCGDLAITVQPGKHIPAQTKPNYLIISSYASSLDHESSFDSFYSLPGSGVKKESQPEACSLSSSRLSVASSSYKPIDHTSFAANLNEVSEFPSLGMRNSSKHHGIAASAQREWNARNLPTHSRLIRKVSDNDFSVNGADGKLKK.

The segment at residues 2–69 (APKKHSGFMM…AQRAKRESSN (68 aa)) is a DNA-binding region (HMG box). The segment at 43-78 (NTQQRGPYNSGGKDANVAQRAKRESSNGHGQVDKAQ) is disordered. Residues 63-78 (AKRESSNGHGQVDKAQ) show a composition bias toward basic and acidic residues.

Belongs to the maelstrom family. In germaria and egg chambers, it is detected in the germline. In the germarium, it is in all regions, including region I where the germ cells are dividing. In early egg chambers, it is uniformly distributed throughout the nurse cells and oocyte but, by stage 5, it is most concentrated around the outer margins of the cells, closest to the periphery of the egg chamber. Level decreases in stages 5 and 6, but most noticeably in the oocyte, where protein level remains. No detectable protein from stage 8 onward (at protein level).

The protein localises to the cytoplasm. It localises to the nucleus. The protein resides in the perinuclear region. Its subcellular location is the cytoplasmic ribonucleoprotein granule. Functionally, involved both in the piRNA and miRNA metabolic processes. As a component of the meiotic nuage, plays a central role during oogenesis by repressing transposable elements and preventing their mobilization, which is essential for the germline integrity. Repression of transposable elements is mediated via the piRNA metabolic process, which mediates the repression of transposable elements during meiosis by forming complexes composed of piRNAs and Piwi proteins and governs the repression of transposons. As a nuclear component, it is required for proper differentiation in the germline stem cell (GSC) lineage by repressing microRNA-7 (miR-7), thereby acting as an indirect regulator of bag-of-marbles (Bam). Acts by binding to the promoter of miR-7 gene and repressing its expression; miR-7 repression alleviates the Bam repression by miR-7, thereby allowing differentiation in the germline stem cell (GSC) lineage. Indirectly required to position the microtubule organizing center in stage 2-6 oocytes. Involved in repression of long interspersed nuclear elements (LINEs) including HeT-A, I-element, TART and possibly mst40 LINEs; may have a role in production of piwi-interacting RNA (piRNA). The polypeptide is Protein maelstrom (Drosophila melanogaster (Fruit fly)).